The chain runs to 419 residues: Dual specificity mitogen-activated protein kinase kinase 7 (419 aa).

A2 is subject to N-acetylalanine. Residues 2–30 (AASSLEQKLSRLEAKLKQENREARRRIDL) adopt a coiled-coil conformation. A compositionally biased stretch (basic and acidic residues) spans 18-30 (KQENREARRRIDL). The disordered stretch occupies residues 18–77 (KQENREARRRIDLNLDISPQRPRPTLQLPLANDGGSRSPSSESSPQHPTPPSRPRHMLGL). Residues 36-63 (PQRPRPTLQLPLANDGGSRSPSSESSPQ) are compositionally biased toward low complexity. Positions 37 to 57 (QRPRPTLQLPLANDGGSRSPS) are d Domain. The Protein kinase domain maps to 120 to 380 (LENLGEMGSG…YNKLLEHSFI (261 aa)). ATP is bound by residues 126–134 (MGSGTCGQV) and K149. Catalysis depends on D243, which acts as the Proton acceptor. At S271 the chain carries Phosphoserine; by MAP3K. The residue at position 275 (T275) is a Phosphothreonine; by MAP3K. A DVD domain region spans residues 377–400 (HSFIKHYETLEVDVASWFKDVMAK). S411 is modified (phosphoserine).

This sequence belongs to the protein kinase superfamily. STE Ser/Thr protein kinase family. MAP kinase kinase subfamily. Interacts with VRK2. Interacts (via its D domain) with its substrates MAPK8/JNK1, MAPK9/JNK2 and MAPK10/JNK3. Interacts (via its DVD domain) with MAP3Ks activators like MAP3K5/ASK1 and MAP3K1/MEKK1. Interacts with MAPK8IP1/JIP1, MAPK8IP2/JIP2 and MAPK8IP3/JIP3 scaffold proteins. Interacts with RASSF7, the interaction promotes phosphorylation. Found in a complex with SH3RF1, RAC1, MAP3K11/MLK3, MAPK8IP1/JIP1 and MAPK8/JNK1. Found in a complex with SH3RF1, RAC2, MAP3K7/TAK1, MAPK8IP1/JIP1, MAPK8/JNK1 and MAPK9/JNK2. Mg(2+) is required as a cofactor. In terms of processing, activated by phosphorylation on Ser-271 and Thr-275 by MAP kinase kinase kinases (MAP3Ks).

The protein localises to the nucleus. Its subcellular location is the cytoplasm. It catalyses the reaction L-seryl-[protein] + ATP = O-phospho-L-seryl-[protein] + ADP + H(+). It carries out the reaction L-threonyl-[protein] + ATP = O-phospho-L-threonyl-[protein] + ADP + H(+). The enzyme catalyses L-tyrosyl-[protein] + ATP = O-phospho-L-tyrosyl-[protein] + ADP + H(+). Activated by phosphorylation by specific MAP kinase kinase kinases such as MAP3K1/MEKK1, MAP3K3/MEKK3, MAP3K11/MLK3 and MAP3K12/DLK. Functionally, dual specificity protein kinase which acts as an essential component of the MAP kinase signal transduction pathway. Essential component of the stress-activated protein kinase/c-Jun N-terminal kinase (SAP/JNK) signaling pathway. With MAP2K4/MKK4, is the one of the only known kinase to directly activate the stress-activated protein kinase/c-Jun N-terminal kinases MAPK8/JNK1, MAPK9/JNK2 and MAPK10/JNK3. MAP2K4/MKK4 and MAP2K7/MKK7 both activate the JNKs by phosphorylation, but they differ in their preference for the phosphorylation site in the Thr-Pro-Tyr motif. MAP2K4/MKK4 shows preference for phosphorylation of the Tyr residue and MAP2K7/MKK7 for the Thr residue. The monophosphorylation of JNKs on the Thr residue is sufficient to increase JNK activity indicating that MAP2K7/MKK7 is important to trigger JNK activity, while the additional phosphorylation of the Tyr residue by MAP2K4/MKK4 ensures optimal JNK activation. Has a specific role in JNK signal transduction pathway activated by pro-inflammatory cytokines. The MKK/JNK signaling pathway is also involved in mitochondrial death signaling pathway, including the release cytochrome c, leading to apoptosis. Part of a non-canonical MAPK signaling pathway, composed of the upstream MAP3K12 kinase and downstream MAP kinases MAPK1/ERK2 and MAPK3/ERK1, that enhances the AP-1-mediated transcription of APP in response to APOE. This is Dual specificity mitogen-activated protein kinase kinase 7 from Rattus norvegicus (Rat).